The sequence spans 38 residues: Large ribosomal subunit protein bL36 (38 aa).

The protein belongs to the bacterial ribosomal protein bL36 family.

The sequence is that of Large ribosomal subunit protein bL36 from Psychrobacter cryohalolentis (strain ATCC BAA-1226 / DSM 17306 / VKM B-2378 / K5).